A 98-amino-acid chain; its full sequence is Protein PROLINE CONTENT ALTERNATIVE 22 (98 aa).

In terms of tissue distribution, mainly expressed in flowers, to a lower extent, in roots and, at very low levels, in leaves and stems.

The protein resides in the cytoplasm. Its function is as follows. Acts as an opponent to RZF1 during early seedling growth in term of proline accumulation in response to dehydration and abscisic acid (ABA). Confers sensitivity to abiotic stresses such as ABA, drought and osmotic stress (e.g. mannitol treatment) by preventing proline accumulation and by reducing the expression of dehydration-inducible genes. Promotes the production of lipid peroxidation by drought stress thus leading to malondialdehyde (MDA) synthesis. Prevents pollen tube elongation. Necessary for RZF1 expression in seedlings. The protein is Protein PROLINE CONTENT ALTERNATIVE 22 of Arabidopsis thaliana (Mouse-ear cress).